We begin with the raw amino-acid sequence, 511 residues long: Probable DNA ligase (511 aa).

Position 208 (glutamate 208) interacts with ATP. Lysine 210 acts as the N6-AMP-lysine intermediate in catalysis. Positions 215, 230, 259, 299, 377, and 383 each coordinate ATP.

It belongs to the ATP-dependent DNA ligase family. It depends on Mg(2+) as a cofactor.

It catalyses the reaction ATP + (deoxyribonucleotide)n-3'-hydroxyl + 5'-phospho-(deoxyribonucleotide)m = (deoxyribonucleotide)n+m + AMP + diphosphate.. Its function is as follows. DNA ligase that seals nicks in double-stranded DNA during DNA replication, DNA recombination and DNA repair. The chain is Probable DNA ligase from Streptomyces griseus subsp. griseus (strain JCM 4626 / CBS 651.72 / NBRC 13350 / KCC S-0626 / ISP 5235).